The sequence spans 177 residues: Large ribosomal subunit protein uL6 (177 aa).

This sequence belongs to the universal ribosomal protein uL6 family. In terms of assembly, part of the 50S ribosomal subunit.

This protein binds to the 23S rRNA, and is important in its secondary structure. It is located near the subunit interface in the base of the L7/L12 stalk, and near the tRNA binding site of the peptidyltransferase center. This Neisseria meningitidis serogroup C (strain 053442) protein is Large ribosomal subunit protein uL6.